A 375-amino-acid chain; its full sequence is Serpentine receptor class alpha-39 (375 aa).

7 helical membrane-spanning segments follow: residues 17-37 (LFAIIFQGTSGYLTFPILFII), 51-71 (LVFLMMLNVVSCLLLGGLTAW), 99-119 (IRGTFLFAFCLVTTSHAGILL), 138-158 (LGTILAIVAVAVAATAIFILL), 183-203 (VYVMFFVQLLLDAVISIVHLV), 236-256 (TPLLILSNVTIGVYIFIVSVF), and 275-295 (LFIMPHMPFMFTSLILVELWL).

The protein belongs to the nematode receptor-like protein sra family.

The protein localises to the membrane. This Caenorhabditis elegans protein is Serpentine receptor class alpha-39 (sra-39).